We begin with the raw amino-acid sequence, 278 residues long: MKKIGFVGAGSMAEAMINGILQSGITKPEHIYITNRSNDERLIELKETYSVRPCRDKNEFFTHTDIIILAFKPKDAAESIDSIRPYIKDQLVISVLAGLTIETIQHYFGRKLAVIRVMPNTSAAIRKSATGFSVSTEASKNDIIAAKALLETIGDATLVEERHLDAVTAIAGSGPAYVYRYIEAMEKAAQKVGLDKETAKALILQTMAGATDMLLQSGKQPEKLRKEITSPGGTTEAGLRALQDSRFEEAIIHCIEETAKRSAEIKEQFAGAALERHS.

It belongs to the pyrroline-5-carboxylate reductase family.

Its subcellular location is the cytoplasm. It carries out the reaction L-proline + NADP(+) = (S)-1-pyrroline-5-carboxylate + NADPH + 2 H(+). It catalyses the reaction L-proline + NAD(+) = (S)-1-pyrroline-5-carboxylate + NADH + 2 H(+). It participates in amino-acid biosynthesis; L-proline biosynthesis; L-proline from L-glutamate 5-semialdehyde: step 1/1. Catalyzes the reduction of 1-pyrroline-5-carboxylate (PCA) to L-proline. The sequence is that of Pyrroline-5-carboxylate reductase 2 (proI) from Bacillus subtilis (strain 168).